Here is a 342-residue protein sequence, read N- to C-terminus: Dihydroorotase (342 aa).

Residues His13 and His15 each coordinate Zn(2+). Residues 15–17 (HLR) and Asn41 contribute to the substrate site. Zn(2+)-binding residues include Lys98, His135, and His173. An N6-carboxylysine modification is found at Lys98. His135 is a binding site for substrate. Leu218 contributes to the substrate binding site. Position 246 (Asp246) interacts with Zn(2+). Asp246 is a catalytic residue. Residues His250 and Ala262 each contribute to the substrate site.

Belongs to the metallo-dependent hydrolases superfamily. DHOase family. Class II DHOase subfamily. As to quaternary structure, homodimer. Zn(2+) serves as cofactor.

It carries out the reaction (S)-dihydroorotate + H2O = N-carbamoyl-L-aspartate + H(+). Its pathway is pyrimidine metabolism; UMP biosynthesis via de novo pathway; (S)-dihydroorotate from bicarbonate: step 3/3. Catalyzes the reversible cyclization of carbamoyl aspartate to dihydroorotate. The polypeptide is Dihydroorotase (Vibrio campbellii (strain ATCC BAA-1116)).